The chain runs to 393 residues: MSTEETKKEQALQNYRDRLIEHKNAELRLNKAHELIKKLKKDFQKTEDHIKTIQYIGEIIGEVLRSLDEERFIVKACNGPRYVVRCANYQDKAHLLVPGARVTLDLTTLTILKILPREVDPIIFNMTAESPGSVSYGEIGGLSNQIRELREVVELPLMIPELFIRVGIKAPKGVLLYGPPGTGKTLLARAIASNLEANFLKVVSSAIVDKYIGESARVIREMFGYARDHQPCVIFMDEIDAIGGRRFSEGTSADREIQRTLMELLNQMDGFDTLSKVKIIMATNRPDVLDPALLRPGRLDRKIEIPLPNEAGRVDVLKIHAANITKHGDVDYEAIAKLADGFNAADLRNVCTEAGMFAIRAERDYVMEEDFMKAVRKCQEAKKLEGKLDYQKV.

G178–T185 serves as a coordination point for ATP.

This sequence belongs to the AAA ATPase family.

It localises to the cytoplasm. It is found in the nucleus. Functionally, the 26S proteasome is involved in the ATP-dependent degradation of ubiquitinated proteins. The regulatory (or ATPase) complex confers ATP dependency and substrate specificity to the 26S complex. The sequence is that of 26S proteasome regulatory subunit 10B (psmC6) from Dictyostelium discoideum (Social amoeba).